Consider the following 144-residue polypeptide: Small ribosomal subunit protein eS10A (144 aa).

The interval threonine 90–glutamine 144 is disordered. A compositionally biased stretch (basic and acidic residues) spans glycine 103 to glycine 126.

Belongs to the eukaryotic ribosomal protein eS10 family. In terms of assembly, component of the small ribosomal subunit (SSU). Mature yeast ribosomes consist of a small (40S) and a large (60S) subunit. The 40S small subunit contains 1 molecule of ribosomal RNA (18S rRNA) and at least 33 different proteins. The large 60S subunit contains 3 rRNA molecules (25S, 5.8S and 5S rRNA) and at least 46 different proteins. eS10 interacts with GCN1 (via middle region); this interaction is direct and promotes GCN2 kinase activity.

The protein localises to the cytoplasm. In terms of biological role, component of the ribosome, a large ribonucleoprotein complex responsible for the synthesis of proteins in the cell. The small ribosomal subunit (SSU) binds messenger RNAs (mRNAs) and translates the encoded message by selecting cognate aminoacyl-transfer RNA (tRNA) molecules. The large subunit (LSU) contains the ribosomal catalytic site termed the peptidyl transferase center (PTC), which catalyzes the formation of peptide bonds, thereby polymerizing the amino acids delivered by tRNAs into a polypeptide chain. The nascent polypeptides leave the ribosome through a tunnel in the LSU and interact with protein factors that function in enzymatic processing, targeting, and the membrane insertion of nascent chains at the exit of the ribosomal tunnel. eS10 plays a role as a positive regulator of the GCN2 kinase activity by stimulating GCN1-mediated GCN2 activation. The protein is Small ribosomal subunit protein eS10A (rps1001) of Schizosaccharomyces pombe (strain 972 / ATCC 24843) (Fission yeast).